Reading from the N-terminus, the 139-residue chain is Invertebrate-type lysozyme 3 (139 aa).

Residues 1–18 form the signal peptide; it reads MFVKSLVFLTIAVAYASA. An I-type lysozyme domain is found at 19 to 138; sequence DCLHCICMRE…WNGIKSCCGC (120 aa). Disulfide bonds link Cys20–Cys106, Cys23–Cys138, Cys25–Cys31, Cys36–Cys45, Cys58–Cys86, Cys76–Cys82, and Cys98–Cys120. Glu28 (proton donor) is an active-site residue. The Nucleophile role is filled by Asp39. Substrate is bound at residue 51-57; sequence KLPYYED. Residues Tyr90 and 113–115 contribute to the substrate site; that span reads HNG.

It belongs to the glycosyl hydrolase 22 family. Type-I lysozyme subfamily. In terms of tissue distribution, expressed in pharynx grinder muscle pm7, isthmus marginal cell mc2 and pharyngeal muscle cell pm5, intestinal cells and at lower levels in coelomocytes and epidermis. Expressed at low levels in intestine.

The protein resides in the late endosome lumen. It localises to the recycling endosome lumen. The protein localises to the lysosome lumen. It is found in the secreted. It carries out the reaction Hydrolysis of (1-&gt;4)-beta-linkages between N-acetylmuramic acid and N-acetyl-D-glucosamine residues in a peptidoglycan and between N-acetyl-D-glucosamine residues in chitodextrins.. Has bacteriolytic activity against Gram-positive bacteria. Plays a role in defense against bacterial pathogens. Involved in pharyngeal grinder function by enabling proper lysis of ingested bacteria. This chain is Invertebrate-type lysozyme 3, found in Caenorhabditis elegans.